A 329-amino-acid polypeptide reads, in one-letter code: Delta-aminolevulinic acid dehydratase (329 aa).

Residues Cys122, Cys124, and Cys132 each coordinate Zn(2+). The active-site Schiff-base intermediate with substrate is Lys199. 5-aminolevulinate contacts are provided by Arg209 and Arg221. The active-site Schiff-base intermediate with substrate is the Lys252. 2 residues coordinate 5-aminolevulinate: Ser279 and Tyr318.

Belongs to the ALAD family. In terms of assembly, homooctamer. It depends on Zn(2+) as a cofactor.

It catalyses the reaction 2 5-aminolevulinate = porphobilinogen + 2 H2O + H(+). It participates in porphyrin-containing compound metabolism; protoporphyrin-IX biosynthesis; coproporphyrinogen-III from 5-aminolevulinate: step 1/4. In terms of biological role, catalyzes an early step in the biosynthesis of tetrapyrroles. Binds two molecules of 5-aminolevulinate per subunit, each at a distinct site, and catalyzes their condensation to form porphobilinogen. The protein is Delta-aminolevulinic acid dehydratase (hem2) of Schizosaccharomyces pombe (strain 972 / ATCC 24843) (Fission yeast).